Here is a 434-residue protein sequence, read N- to C-terminus: Glutamyl-tRNA reductase (434 aa).

Residues 52 to 55 (TCNR), Ser-115, 120 to 122 (ETQ), and Gln-126 contribute to the substrate site. Cys-53 (nucleophile) is an active-site residue. 195–200 (GAGEMI) provides a ligand contact to NADP(+).

The protein belongs to the glutamyl-tRNA reductase family. In terms of assembly, homodimer.

It catalyses the reaction (S)-4-amino-5-oxopentanoate + tRNA(Glu) + NADP(+) = L-glutamyl-tRNA(Glu) + NADPH + H(+). It functions in the pathway porphyrin-containing compound metabolism; protoporphyrin-IX biosynthesis; 5-aminolevulinate from L-glutamyl-tRNA(Glu): step 1/2. Functionally, catalyzes the NADPH-dependent reduction of glutamyl-tRNA(Glu) to glutamate 1-semialdehyde (GSA). The polypeptide is Glutamyl-tRNA reductase (Cupriavidus pinatubonensis (strain JMP 134 / LMG 1197) (Cupriavidus necator (strain JMP 134))).